The chain runs to 338 residues: Pyridoxal 5'-phosphate synthase subunit PdxS (338 aa).

Position 66 (Asp66) interacts with D-ribose 5-phosphate. Lys123 acts as the Schiff-base intermediate with D-ribose 5-phosphate in catalysis. Residue Gly195 coordinates D-ribose 5-phosphate. Lys207 contacts D-glyceraldehyde 3-phosphate. D-ribose 5-phosphate contacts are provided by residues Gly256 and 277–278 (GS).

Belongs to the PdxS/SNZ family. In the presence of PdxT, forms a dodecamer of heterodimers.

It catalyses the reaction aldehydo-D-ribose 5-phosphate + D-glyceraldehyde 3-phosphate + L-glutamine = pyridoxal 5'-phosphate + L-glutamate + phosphate + 3 H2O + H(+). It participates in cofactor biosynthesis; pyridoxal 5'-phosphate biosynthesis. Functionally, catalyzes the formation of pyridoxal 5'-phosphate from ribose 5-phosphate (RBP), glyceraldehyde 3-phosphate (G3P) and ammonia. The ammonia is provided by the PdxT subunit. Can also use ribulose 5-phosphate and dihydroxyacetone phosphate as substrates, resulting from enzyme-catalyzed isomerization of RBP and G3P, respectively. The protein is Pyridoxal 5'-phosphate synthase subunit PdxS of Saccharolobus islandicus (strain L.S.2.15 / Lassen #1) (Sulfolobus islandicus).